The chain runs to 79 residues: Acyl carrier protein (79 aa).

The 76-residue stretch at 1–76 (MSLEDDVIAI…DVFTYIKKRQ (76 aa)) folds into the Carrier domain. An O-(pantetheine 4'-phosphoryl)serine modification is found at serine 36.

The protein belongs to the acyl carrier protein (ACP) family. In terms of processing, 4'-phosphopantetheine is transferred from CoA to a specific serine of apo-ACP by AcpS. This modification is essential for activity because fatty acids are bound in thioester linkage to the sulfhydryl of the prosthetic group.

The protein localises to the cytoplasm. The protein operates within lipid metabolism; fatty acid biosynthesis. In terms of biological role, carrier of the growing fatty acid chain in fatty acid biosynthesis. The polypeptide is Acyl carrier protein (Chlamydia pneumoniae (Chlamydophila pneumoniae)).